A 384-amino-acid chain; its full sequence is PqqA peptide cyclase (384 aa).

The Radical SAM core domain maps to 5–220; the sequence is VGLPLWLLAE…TNEYREKLKA (216 aa). [4Fe-4S] cluster is bound by residues Cys19, Cys23, and Cys26.

The protein belongs to the radical SAM superfamily. PqqE family. As to quaternary structure, interacts with PqqD. The interaction is necessary for activity of PqqE. The cofactor is [4Fe-4S] cluster.

It carries out the reaction [PQQ precursor protein] + S-adenosyl-L-methionine = E-Y cross-linked-[PQQ precursor protein] + 5'-deoxyadenosine + L-methionine + H(+). The protein operates within cofactor biosynthesis; pyrroloquinoline quinone biosynthesis. Catalyzes the cross-linking of a glutamate residue and a tyrosine residue in the PqqA protein as part of the biosynthesis of pyrroloquinoline quinone (PQQ). The protein is PqqA peptide cyclase (pqqE) of Acinetobacter calcoaceticus.